A 136-amino-acid chain; its full sequence is Histone H3.3 (136 aa).

The disordered stretch occupies residues 1–43 (MARTKQTARKSTGGKAPRKQLATKAARKSAPSTGGVKKPHRYR). Asymmetric dimethylarginine; by PRMT6 is present on Arg3. Position 4 is a phosphothreonine; by HASPIN and VRK1 (Thr4). Allysine; alternate is present on Lys5. Residue Lys5 is modified to N6,N6,N6-trimethyllysine; alternate. Lys5 carries the N6,N6-dimethyllysine; alternate modification. At Lys5 the chain carries N6-(2-hydroxyisobutyryl)lysine; alternate. Lys5 is subject to N6-acetyllysine; alternate. Lys5 is subject to N6-methyllysine; alternate. Position 6 is a 5-glutamyl dopamine; alternate (Gln6). 5-glutamyl serotonin; alternate is present on Gln6. Phosphothreonine; by PKC is present on Thr7. At Lys10 the chain carries N6-(2-hydroxyisobutyryl)lysine; alternate. Lys10 bears the N6-lactoyllysine; alternate mark. Lys10 carries the post-translational modification N6-methylated lysine. Residue Ser11 is modified to ADP-ribosylserine; alternate. Position 11 is a phosphoserine; alternate; by AURKB, AURKC, RPS6KA3, RPS6KA4 and RPS6KA5 (Ser11). Thr12 carries the post-translational modification Phosphothreonine; by PKC. An N6-(2-hydroxyisobutyryl)lysine; alternate modification is found at Lys15. The residue at position 15 (Lys15) is an N6-lactoyllysine; alternate. Lys15 carries the N6-acetyllysine modification. Lys15 is subject to N6-glutaryllysine; alternate. An Asymmetric dimethylarginine modification is found at Arg18. Residues Lys19, Lys24, and Lys28 each carry the N6-(2-hydroxyisobutyryl)lysine; alternate modification. Lys19 carries the N6-acetyllysine; alternate modification. Lys19, Lys24, and Lys28 each carry N6-lactoyllysine; alternate. Lys19, Lys24, and Lys28 each carry N6-glutaryllysine; alternate. An N6-butyryllysine; alternate mark is found at Lys19 and Lys24. An N6-methylated lysine; alternate modification is found at Lys19. Lys24 is modified (N6-acetyllysine). The residue at position 28 (Lys28) is an N6-acetyllysine; alternate. N6-methylated lysine; alternate is present on Lys28. An ADP-ribosylserine; alternate modification is found at Ser29. The residue at position 29 (Ser29) is a Phosphoserine; alternate; by AURKB, AURKC and RPS6KA5. An N6-(2-hydroxyisobutyryl)lysine; alternate modification is found at Lys37. N6-acetyllysine; alternate is present on Lys37. The residue at position 37 (Lys37) is an N6-methylated lysine; alternate. Phosphotyrosine is present on Tyr42. N6-(2-hydroxyisobutyryl)lysine; alternate is present on Lys57. The residue at position 57 (Lys57) is an N6-lactoyllysine; alternate. Position 57 is an N6-glutaryllysine; alternate (Lys57). Lys57 is modified (N6-succinyllysine; alternate). Phosphoserine is present on Ser58. N6-(2-hydroxyisobutyryl)lysine; alternate occurs at positions 65 and 80. Lys65 and Lys80 each carry N6-methylated lysine. Lys80 carries the N6-lactoyllysine; alternate modification. The residue at position 80 (Lys80) is an N6-glutaryllysine; alternate. Lys80 carries the post-translational modification N6-succinyllysine; alternate. Phosphothreonine is present on Thr81. N6-acetyllysine; alternate is present on residues Lys116 and Lys123. 2 positions are modified to N6-glutaryllysine; alternate: Lys116 and Lys123. Residue Lys123 is modified to N6-(2-hydroxyisobutyryl)lysine; alternate. An N6-methyllysine; alternate modification is found at Lys123. Residue Lys123 is modified to N6-succinyllysine; alternate.

Belongs to the histone H3 family. In terms of assembly, the nucleosome is a histone octamer containing two molecules each of H2A, H2B, H3 and H4 assembled in one H3-H4 heterotetramer and two H2A-H2B heterodimers. The octamer wraps approximately 147 bp of DNA. Interacts with zmynd11; when trimethylated at 'Lys-36' (H3.3K36me3). In terms of processing, acetylation is generally linked to gene activation. Acetylation on Lys-19 (H3K18ac) and Lys-24 (H3K24ac) favors methylation at Arg-18 (H3R17me). Acetylation at Lys-123 (H3K122ac) by EP300/p300 plays a central role in chromatin structure: localizes at the surface of the histone octamer and stimulates transcription, possibly by promoting nucleosome instability. Asymmetric dimethylation at Arg-18 (H3R17me2a) is linked to gene activation. Asymmetric dimethylation at Arg-3 (H3R2me2a) by prmt6 is linked to gene repression and is mutually exclusive with H3 Lys-5 methylation (H3K4me2 and H3K4me3). H3R2me2a is present at the 3' of genes regardless of their transcription state and is enriched on inactive promoters, while it is absent on active promoters. Post-translationally, specifically enriched in modifications associated with active chromatin such as methylation at Lys-5 (H3K4me), Lys-37 (H3K36me) and Lys-80 (H3K79me) are linked to gene activation. Methylation at Lys-5 (H3K4me) facilitates subsequent acetylation of H3 and H4. Methylation at Lys-80 (H3K79me) is associated with DNA double-strand break (DSB) responses and is a specific target for tp53bp1. Methylation at Lys-10 (H3K9me) and Lys-28 (H3K27me) are linked to gene repression. Methylation at Lys-10 (H3K9me) is a specific target for HP1 proteins (cbx1, cbx3 and cbx5) and prevents subsequent phosphorylation at Ser-11 (H3S10ph) and acetylation of H3 and H4. Methylation at Lys-5 (H3K4me) and Lys-80 (H3K79me) require preliminary monoubiquitination of H2B at 'Lys-120'. In terms of processing, phosphorylated at Thr-4 (H3T3ph) by VRK1. Phosphorylated at Thr-4 (H3T3ph) by HASPIN during prophase and dephosphorylated during anaphase. Phosphorylation at Ser-11 (H3S10ph) by aurkb is crucial for chromosome condensation and cell-cycle progression during mitosis and meiosis. In addition phosphorylation at Ser-11 (H3S10ph) by RPS6KA4 and RPS6KA5 is important during interphase because it enables the transcription of genes following external stimulation, like mitogens, stress, growth factors or UV irradiation and result in the activation of genes, such as c-fos and c-jun. Phosphorylation at Ser-11 (H3S10ph), which is linked to gene activation, prevents methylation at Lys-10 (H3K9me) but facilitates acetylation of H3 and H4. Phosphorylation at Ser-11 (H3S10ph) by aurkb mediates the dissociation of HP1 proteins (cbx1, cbx3 and cbx5) from heterochromatin. Phosphorylation at Ser-11 (H3S10ph) is also an essential regulatory mechanism for neoplastic cell transformation. Phosphorylated at Ser-29 (H3S28ph) by map3k20 isoform 1, rps6ka5 or aurkb during mitosis or upon ultraviolet B irradiation. Phosphorylation at Thr-7 (H3T6ph) by prkcb is a specific tag for epigenetic transcriptional activation that prevents demethylation of Lys-5 (H3K4me) by lsd1/kdm1a. At centromeres, specifically phosphorylated at Thr-12 (H3T11ph) from prophase to early anaphase, by DAPK3 and PKN1. Phosphorylation at Thr-12 (H3T11ph) by PKN1 or isoform M2 of PKM (PKM2) is a specific tag for epigenetic transcriptional activation that promotes demethylation of Lys-10 (H3K9me) by kdm4c/jmjd2c. Phosphorylation at Tyr-42 (H3Y41ph) by jak2 promotes exclusion of cbx5 (HP1 alpha) from chromatin. Phosphorylation on Ser-32 (H3S31ph) is specific to regions bordering centromeres in metaphase chromosomes. Monoubiquitinated by rag1 in lymphoid cells, monoubiquitination is required for V(D)J recombination. Post-translationally, lysine deamination at Lys-5 (H3K4all) to form allysine only takes place on H3K4me3 and results in gene repression. In terms of processing, butyrylation of histones marks active promoters and competes with histone acetylation. It is present during late spermatogenesis. Succinylation at Lys-80 (H3K79succ) by KAT2A takes place with a maximum frequency around the transcription start sites of genes. It gives a specific tag for epigenetic transcription activation. Desuccinylation at Lys-123 (H3K122succ) by SIRT7 in response to DNA damage promotes chromatin condensation and double-strand breaks (DSBs) repair. Post-translationally, serine ADP-ribosylation constitutes the primary form of ADP-ribosylation of proteins in response to DNA damage. Serine ADP-ribosylation at Ser-11 (H3S10ADPr) is mutually exclusive with phosphorylation at Ser-11 (H3S10ph) and impairs acetylation at Lys-10 (H3K9ac). In terms of processing, serotonylated by TGM2 at Gln-6 (H3Q5ser) during serotonergic neuron differentiation. H3Q5ser is associated with trimethylation of Lys-5 (H3K4me3) and enhances general transcription factor IID (TFIID) complex-binding to H3K4me3, thereby facilitating transcription. Dopaminylated by TGM2 at Gln-6 (H3Q5dop) in ventral tegmental area (VTA) neurons. H3Q5dop mediates neurotransmission-independent role of nuclear dopamine by regulating relapse-related transcriptional plasticity in the reward system. Post-translationally, lactylated in macrophages by EP300/P300 by using lactoyl-CoA directly derived from endogenous or exogenous lactate, leading to stimulates gene transcription.

The protein localises to the nucleus. It localises to the chromosome. Functionally, variant histone H3 which replaces conventional H3 in a wide range of nucleosomes in active genes. Constitutes the predominant form of histone H3 in non-dividing cells and is incorporated into chromatin independently of DNA synthesis. Deposited at sites of nucleosomal displacement throughout transcribed genes, suggesting that it represents an epigenetic imprint of transcriptionally active chromatin. Nucleosomes wrap and compact DNA into chromatin, limiting DNA accessibility to the cellular machineries which require DNA as a template. Histones thereby play a central role in transcription regulation, DNA repair, DNA replication and chromosomal stability. DNA accessibility is regulated via a complex set of post-translational modifications of histones, also called histone code, and nucleosome remodeling. The sequence is that of Histone H3.3 (h3f3a) from Danio rerio (Zebrafish).